The primary structure comprises 72 residues: Translation initiation factor IF-1 (72 aa).

One can recognise an S1-like domain in the interval 1-72; it reads MAKEDNIEMQ…SKGRIVFRSR (72 aa).

Belongs to the IF-1 family. Component of the 30S ribosomal translation pre-initiation complex which assembles on the 30S ribosome in the order IF-2 and IF-3, IF-1 and N-formylmethionyl-tRNA(fMet); mRNA recruitment can occur at any time during PIC assembly.

Its subcellular location is the cytoplasm. Its function is as follows. One of the essential components for the initiation of protein synthesis. Stabilizes the binding of IF-2 and IF-3 on the 30S subunit to which N-formylmethionyl-tRNA(fMet) subsequently binds. Helps modulate mRNA selection, yielding the 30S pre-initiation complex (PIC). Upon addition of the 50S ribosomal subunit IF-1, IF-2 and IF-3 are released leaving the mature 70S translation initiation complex. The chain is Translation initiation factor IF-1 from Salmonella paratyphi A (strain ATCC 9150 / SARB42).